We begin with the raw amino-acid sequence, 300 residues long: Phosphatidylserine decarboxylase proenzyme (300 aa).

Catalysis depends on charge relay system; for autoendoproteolytic cleavage activity residues aspartate 113, histidine 169, and serine 256. The Schiff-base intermediate with substrate; via pyruvic acid; for decarboxylase activity role is filled by serine 256. At serine 256 the chain carries Pyruvic acid (Ser); by autocatalysis.

This sequence belongs to the phosphatidylserine decarboxylase family. PSD-B subfamily. Prokaryotic type II sub-subfamily. As to quaternary structure, heterodimer of a large membrane-associated beta subunit and a small pyruvoyl-containing alpha subunit. Pyruvate is required as a cofactor. Post-translationally, is synthesized initially as an inactive proenzyme. Formation of the active enzyme involves a self-maturation process in which the active site pyruvoyl group is generated from an internal serine residue via an autocatalytic post-translational modification. Two non-identical subunits are generated from the proenzyme in this reaction, and the pyruvate is formed at the N-terminus of the alpha chain, which is derived from the carboxyl end of the proenzyme. The autoendoproteolytic cleavage occurs by a canonical serine protease mechanism, in which the side chain hydroxyl group of the serine supplies its oxygen atom to form the C-terminus of the beta chain, while the remainder of the serine residue undergoes an oxidative deamination to produce ammonia and the pyruvoyl prosthetic group on the alpha chain. During this reaction, the Ser that is part of the protease active site of the proenzyme becomes the pyruvoyl prosthetic group, which constitutes an essential element of the active site of the mature decarboxylase.

The protein localises to the cell membrane. The catalysed reaction is a 1,2-diacyl-sn-glycero-3-phospho-L-serine + H(+) = a 1,2-diacyl-sn-glycero-3-phosphoethanolamine + CO2. It participates in phospholipid metabolism; phosphatidylethanolamine biosynthesis; phosphatidylethanolamine from CDP-diacylglycerol: step 2/2. Functionally, catalyzes the formation of phosphatidylethanolamine (PtdEtn) from phosphatidylserine (PtdSer). In Ruminiclostridium cellulolyticum (strain ATCC 35319 / DSM 5812 / JCM 6584 / H10) (Clostridium cellulolyticum), this protein is Phosphatidylserine decarboxylase proenzyme.